The sequence spans 155 residues: Ribosomal RNA large subunit methyltransferase H (155 aa).

Residues leucine 72, glycine 103, and 122-127 (LSDLTL) contribute to the S-adenosyl-L-methionine site.

The protein belongs to the RNA methyltransferase RlmH family. As to quaternary structure, homodimer.

It is found in the cytoplasm. It catalyses the reaction pseudouridine(1915) in 23S rRNA + S-adenosyl-L-methionine = N(3)-methylpseudouridine(1915) in 23S rRNA + S-adenosyl-L-homocysteine + H(+). Its function is as follows. Specifically methylates the pseudouridine at position 1915 (m3Psi1915) in 23S rRNA. This Variovorax paradoxus (strain S110) protein is Ribosomal RNA large subunit methyltransferase H.